A 95-amino-acid chain; its full sequence is Small ribosomal subunit protein bS6 (95 aa).

This sequence belongs to the bacterial ribosomal protein bS6 family.

Functionally, binds together with bS18 to 16S ribosomal RNA. The protein is Small ribosomal subunit protein bS6 of Clostridium acetobutylicum (strain ATCC 824 / DSM 792 / JCM 1419 / IAM 19013 / LMG 5710 / NBRC 13948 / NRRL B-527 / VKM B-1787 / 2291 / W).